The sequence spans 270 residues: Phospholysine phosphohistidine inorganic pyrophosphate phosphatase (270 aa).

Asp-17 and Ser-19 together coordinate Mg(2+). Substrate is bound by residues 17 to 19 (DIS), 54 to 55 (TN), and Lys-189. Asp-214 contacts Mg(2+).

It belongs to the HAD-like hydrolase superfamily. Homodimer. Mg(2+) is required as a cofactor. In terms of tissue distribution, detected in liver (at protein level).

Its subcellular location is the cytoplasm. The protein resides in the nucleus. It catalyses the reaction diphosphate + H2O = 2 phosphate + H(+). Phosphatase that hydrolyzes imidodiphosphate, 3-phosphohistidine and 6-phospholysine. Has broad substrate specificity and can also hydrolyze inorganic diphosphate, but with lower efficiency. This Bos taurus (Bovine) protein is Phospholysine phosphohistidine inorganic pyrophosphate phosphatase (LHPP).